The sequence spans 142 residues: ATP synthase F(0) complex subunit C3, mitochondrial (142 aa).

The N-terminal 67 residues, 1-67, are a transit peptide targeting the mitochondrion; that stretch reads MFACAKLACT…REFQTSAISR (67 aa). A helical transmembrane segment spans residues 83-103; the sequence is VGVAGSGAGIGTVFGSLIIGY. Lys110 carries the post-translational modification N6,N6,N6-trimethyllysine. Residues 118-138 traverse the membrane as a helical segment; it reads ILGFALSEAMGLFCLMVAFLI.

Belongs to the ATPase C chain family. As to quaternary structure, F-type ATPases have 2 components, CF(1) - the catalytic core - and CF(0) - the membrane proton channel. CF(1) has five subunits: alpha(3), beta(3), gamma(1), delta(1), epsilon(1). CF(0) has three main subunits: a, b and c. Interacts with TMEM70 and TMEM242. Post-translationally, trimethylated by ATPSCKMT at Lys-110. Methylation is required for proper incorporation of the C subunit into the ATP synthase complex and mitochondrial respiration.

The protein localises to the mitochondrion membrane. Its function is as follows. Mitochondrial membrane ATP synthase (F(1)F(0) ATP synthase or Complex V) produces ATP from ADP in the presence of a proton gradient across the membrane which is generated by electron transport complexes of the respiratory chain. F-type ATPases consist of two structural domains, F(1) - containing the extramembraneous catalytic core and F(0) - containing the membrane proton channel, linked together by a central stalk and a peripheral stalk. During catalysis, ATP synthesis in the catalytic domain of F(1) is coupled via a rotary mechanism of the central stalk subunits to proton translocation. Part of the complex F(0) domain. A homomeric c-ring of probably 10 subunits is part of the complex rotary element. This Pongo abelii (Sumatran orangutan) protein is ATP synthase F(0) complex subunit C3, mitochondrial.